The chain runs to 63 residues: MAKDTNKTVKVRLVRGLRGTQSRHRLSVRALGLNKLNDVRELKDSPQVRGLINTVHYLVKVEE.

Belongs to the universal ribosomal protein uL30 family. In terms of assembly, part of the 50S ribosomal subunit.

This Xanthomonas axonopodis pv. citri (strain 306) protein is Large ribosomal subunit protein uL30.